A 388-amino-acid chain; its full sequence is MEVDPGSDDVEADRETRAQKLKLKRNVKFRAQMRRFDEYCGVTNLTVDDLNWPLISGIPLQRQRLTGATYYDDSLLDQNPWDEFSIDRFLEITSIQLITAGAGYERNDEITRFVFQRTMKTIVTYCNFMYDLARRNGKVQITRFELQDLIHRDEFRFYMYFRQFLPNPDPNCTAFSNHYTSLLHTLYFNIPGMPQFWNNSQMYNYAATRGQRLVQNIAAFYPPEYFWNEDESKYHTTFVVPRGTEFSKFYARRFHEALGMPPLENEIITVLDWLAKLCILEIVYHTTIWCDITGFGGLPRIEHYRLAMENVEDIIFDLAIDDFSISRLQLQISPFEISRYSPLDVSGYYETIKRKKDIEEYQNRFYEVHYSDDVRIMNVYATDCSRKR.

6 tandem repeats follow at residues 7 to 10 (SDDV), 110 to 113 (ITRF), 141 to 144 (ITRF), 234 to 237 (YHTT), 284 to 287 (YHTT), and 371 to 374 (SDDV).

In terms of assembly, component of a complex containing fem-1, fem-2 and fem-3. Interacts with fem-1 and fem-2 (via N-terminus). Part of a E3 ubiquitin-protein ligase complex, at least composed of cul-2, elc-1, tra-1, fem-1, fem-2 and fem-3; mediates the ubiquitination and subsequent proteasomal degradation of tra-1. Interacts with tra-1. Interacts with sel-10. Interacts with tra-2.

Its function is as follows. Required for male development. In XO (male) animals, fem-3 directs male differentiation in all tissues. In XX (hermaphrodite) animals, it specifies the first 80 or so germ cells to be sperm. Negatively regulates male development when bound to tra-2. Together with fem-2 associates with the CBC(fem-1) E3 ubiquitin-protein ligase complex which mediates the ubiquitination and subsequent proteasomal degradation of tra-1. In Caenorhabditis elegans, this protein is Sex-determination protein fem-3 (fem-3).